Reading from the N-terminus, the 466-residue chain is MPHSYDYDAIVIGSGPGGEGAAMGLVKQGARVAVIERYQNVGGGCTHWGTIPSKALRHAVSRIIEFNQNPLYSDHSRLLRSSFADILNHADNVINQQTRMRQGFYERNHCEILQGNARFVDEHTLVLDCPDGSVETLTAEKFVIACGSRPYHPTDVDFTHPRIYDSDSILSMHHEPRHVLIYGAGVIGCEYASIFRGMDVKVDLINTRDRLLAFLDQEMSDSLSYHFWNSGVVIRHNEEYEKIEGCDDGVIMHLKSGKKLKADCLLYANGRTGNTDSLALQNIGLETDSRGQLKVNSMYQTAQPHVYAVGDVIGYPSLASAAYDQGRIAAQALVKGEATAHLIEDIPTGIYTIPEISSVGKTEQQLTAMKVPYEVGRAQFKHLARAQIVGMNVGTLKILFHRETKEILGIHCFGERAAEIIHIGQAIMEQKGGGNTIEYFVNTTFNYPTMAEAYRVAALNGLNRLF.

Position 36 to 45 (36 to 45) interacts with FAD; the sequence is ERYQNVGGGC.

The protein belongs to the class-I pyridine nucleotide-disulfide oxidoreductase family. FAD is required as a cofactor.

The protein resides in the cytoplasm. It carries out the reaction NAD(+) + NADPH = NADH + NADP(+). In terms of biological role, conversion of NADPH, generated by peripheral catabolic pathways, to NADH, which can enter the respiratory chain for energy generation. The polypeptide is Soluble pyridine nucleotide transhydrogenase (Shigella boydii serotype 18 (strain CDC 3083-94 / BS512)).